Consider the following 313-residue polypeptide: Solute carrier family 35 member E3 (313 aa).

The next 9 membrane-spanning stretches (helical) occupy residues 17-37 (GLLF…WIYV), 40-60 (GFPN…GLYI), 71-91 (SLPL…VVFT), 126-146 (FSVR…LNSY), 154-174 (LGMV…VWVG), 187-206 (LLYY…VPFF), 225-245 (LMVL…YWII), 252-272 (TYNM…YILF), and 275-295 (PLSV…LTYT).

Belongs to the TPT transporter family. SLC35E subfamily.

It is found in the membrane. Functionally, putative transporter. This is Solute carrier family 35 member E3 (Slc35e3) from Mus musculus (Mouse).